The primary structure comprises 500 residues: L-arabinose isomerase (500 aa).

Mn(2+) contacts are provided by Glu306, Glu333, His350, and His450.

It belongs to the arabinose isomerase family. Homohexamer. It depends on Mn(2+) as a cofactor.

It catalyses the reaction beta-L-arabinopyranose = L-ribulose. It functions in the pathway carbohydrate degradation; L-arabinose degradation via L-ribulose; D-xylulose 5-phosphate from L-arabinose (bacterial route): step 1/3. Its function is as follows. Catalyzes the conversion of L-arabinose to L-ribulose. The protein is L-arabinose isomerase of Shigella dysenteriae serotype 1 (strain Sd197).